Here is a 67-residue protein sequence, read N- to C-terminus: uncharacterized protein (67 aa).

Helical transmembrane passes span 6-26 (GQLW…CVLM) and 38-58 (NNII…IIII).

The protein resides in the membrane. This is an uncharacterized protein from Dictyostelium discoideum (Social amoeba).